The following is a 414-amino-acid chain: uncharacterized protein (414 aa).

Disordered regions lie at residues 136 to 168 (SSKSMAPTAEKELEKPLENGSELQEGDSLTVPT), 298 to 322 (KNFPDSGMRRAVQTPSPQNKMSYHR), and 350 to 382 (PPHSRPMHGSYNKVHVNKEPKPNLSPDKYMSTS).

This is an uncharacterized protein from Macaca fascicularis (Crab-eating macaque).